Consider the following 115-residue polypeptide: NAD(P)H-quinone oxidoreductase subunit M (115 aa).

It belongs to the complex I NdhM subunit family. NDH-1 can be composed of about 15 different subunits; different subcomplexes with different compositions have been identified which probably have different functions.

It is found in the cellular thylakoid membrane. The enzyme catalyses a plastoquinone + NADH + (n+1) H(+)(in) = a plastoquinol + NAD(+) + n H(+)(out). It carries out the reaction a plastoquinone + NADPH + (n+1) H(+)(in) = a plastoquinol + NADP(+) + n H(+)(out). NDH-1 shuttles electrons from an unknown electron donor, via FMN and iron-sulfur (Fe-S) centers, to quinones in the respiratory and/or the photosynthetic chain. The immediate electron acceptor for the enzyme in this species is believed to be plastoquinone. Couples the redox reaction to proton translocation, and thus conserves the redox energy in a proton gradient. Cyanobacterial NDH-1 also plays a role in inorganic carbon-concentration. In Prochlorococcus marinus (strain MIT 9301), this protein is NAD(P)H-quinone oxidoreductase subunit M.